The sequence spans 426 residues: Protein TolB homolog (426 aa).

The N-terminal stretch at 1 to 19 (MFLRSFLCLLCLLPSILYC) is a signal peptide.

Belongs to the TolB family.

The protein resides in the periplasm. The protein is Protein TolB homolog of Chlamydia muridarum (strain MoPn / Nigg).